The sequence spans 167 residues: RNA pyrophosphohydrolase (167 aa).

The Nudix hydrolase domain maps to 8-158 (PYRTCVGMML…KRPVYERVVK (151 aa)). Positions 47 to 68 (GGVDPGEDTWEAAKRELYEETN) match the Nudix box motif.

This sequence belongs to the Nudix hydrolase family. RppH subfamily. A divalent metal cation is required as a cofactor.

Its function is as follows. Accelerates the degradation of transcripts by removing pyrophosphate from the 5'-end of triphosphorylated RNA, leading to a more labile monophosphorylated state that can stimulate subsequent ribonuclease cleavage. This Rhodopseudomonas palustris (strain HaA2) protein is RNA pyrophosphohydrolase.